A 953-amino-acid polypeptide reads, in one-letter code: Translation initiation factor IF-2 (953 aa).

Disordered stretches follow at residues 48-212 and 279-367; these read SSFS…KIDF and TKLK…FHEL. 3 stretches are compositionally biased toward basic and acidic residues: residues 80–89, 98–111, and 140–188; these read TGSEHVEKTQ, FKAE…EQAA, and QGDK…ENHK. Polar residues-rich tracts occupy residues 191–207 and 282–291; these read RFTN…QSKS and KSSNISAKST. Basic and acidic residues predominate over residues 300 to 317; sequence ARPEKNRELTHHSQEGQK. Low complexity predominate over residues 322–338; sequence SWNSQNQVRNQKNSNWN. Residues 339 to 348 show a composition bias toward basic residues; it reads KNKKTKKGKN. In terms of domain architecture, tr-type G spans 454-623; sequence ERAPVVTIMG…LLVAEVEELK (170 aa). Positions 463 to 470 are G1; the sequence is GHVDHGKT. GTP is bound at residue 463 to 470; that stretch reads GHVDHGKT. A G2 region spans residues 488–492; the sequence is GITQH. The G3 stretch occupies residues 509-512; sequence DTPG. GTP contacts are provided by residues 509 to 513 and 563 to 566; these read DTPGH and NKID. Residues 563-566 form a G4 region; that stretch reads NKID. The segment at 599–601 is G5; it reads SAK.

The protein belongs to the TRAFAC class translation factor GTPase superfamily. Classic translation factor GTPase family. IF-2 subfamily.

Its subcellular location is the cytoplasm. One of the essential components for the initiation of protein synthesis. Protects formylmethionyl-tRNA from spontaneous hydrolysis and promotes its binding to the 30S ribosomal subunits. Also involved in the hydrolysis of GTP during the formation of the 70S ribosomal complex. The chain is Translation initiation factor IF-2 from Streptococcus pyogenes serotype M3 (strain ATCC BAA-595 / MGAS315).